We begin with the raw amino-acid sequence, 668 residues long: Kinesin-like protein KIF2B (668 aa).

Position 125 is a phosphothreonine; by PLK1 (threonine 125). The stretch at 149–177 forms a coiled coil; that stretch reads CLREIEKLQKQREKRRRLQLEIRARRALD. A Phosphoserine; by PLK1 modification is found at serine 204. The 331-residue stretch at 213-543 folds into the Kinesin motor domain; the sequence is RICVCVRKRP…LRYANRVKEL (331 aa). 303-310 provides a ligand contact to ATP; that stretch reads GQTGSGKT. Residues 585–604 are compositionally biased toward basic and acidic residues; sequence PTVEKEEEKESDELTSKKEP. Positions 585 to 605 are disordered; it reads PTVEKEEEKESDELTSKKEPA. A coiled-coil region spans residues 646–667; sequence VLTDIQKKLQSLREDLQKKSQV.

Belongs to the TRAFAC class myosin-kinesin ATPase superfamily. Kinesin family. MCAK/KIF2 subfamily. Phosphorylation at Thr-125 by PLK1 is required for activity in the correction of kinetochore-microtubules attachment errors, while phosphorylation at Ser-204 also by PLK1 is required for the kinetochore localization and activity in prometaphase.

The protein resides in the cytoplasm. Its subcellular location is the cytoskeleton. It localises to the microtubule organizing center. The protein localises to the centrosome. It is found in the spindle. The protein resides in the chromosome. Its subcellular location is the centromere. It localises to the kinetochore. In terms of biological role, plus end-directed microtubule-dependent motor required for spindle assembly and chromosome movement during mitosis. Has microtubule depolymerization activity. Plays a role in chromosome congression. In Mus musculus (Mouse), this protein is Kinesin-like protein KIF2B (Kif2b).